We begin with the raw amino-acid sequence, 1011 residues long: Vacuolar membrane protease (1011 aa).

Residues 1–14 (MKLTKAVFRFRRTN) lie on the Cytoplasmic side of the membrane. The helical transmembrane segment at 15–35 (LSTLLVITYLVITTLYVWDHF) threads the bilayer. At 36–352 (RYHFTLPSDY…WFVVWSARSL (317 aa)) the chain is on the vacuolar side. Zn(2+) contacts are provided by His149, Asp161, Glu194, Glu219, and His293. A helical membrane pass occupies residues 353-373 (FYWNCIILALFPSILAILFLV). At 374–390 (AYDMQLLKFNFWDAMLR) the chain is on the cytoplasmic side. A helical membrane pass occupies residues 391-411 (LPVSVCLAYFCVKLFQVLVGQ). Residues 412 to 420 (LNPYVFSRD) lie on the Vacuolar side of the membrane. Residues 421-441 (YVSPILAEASMFIFMNYVILS) form a helical membrane-spanning segment. Over 442 to 451 (SWERLRPLRD) the chain is Cytoplasmic. Residues 452 to 472 (FKTVALVEVSMVLWIYLISVT) form a helical membrane-spanning segment. Topologically, residues 473-487 (RWLRDSDYTATGLYP) are vacuolar. The chain crosses the membrane as a helical span at residues 488 to 508 (FTIGYTFVSIGAIIGVFCATF). Over 509-647 (KAKLNPEDDS…SILNYDWSIQ (139 aa)) the chain is Cytoplasmic. The tract at residues 534 to 585 (MQHQYQQHSQKHSNQHSPHHSTHHSAQHSVHHSPRQSIHQVPSSEQRQRDAS) is disordered. Over residues 542–567 (SQKHSNQHSPHHSTHHSAQHSVHHSP) the composition is skewed to basic residues. Positions 568-578 (RQSIHQVPSSE) are enriched in polar residues. Residues 648–668 (FMVVTPWVTYFTWICLDLIMG) form a helical membrane-spanning segment. The Vacuolar portion of the chain corresponds to 669-681 (AMNQTIQESAKGT). An N-linked (GlcNAc...) asparagine glycan is attached at Asn671. The chain crosses the membrane as a helical span at residues 682 to 702 (TFVTHMALIGSLLLSLPMLPF). At 703-708 (TYKLHS) the chain is on the cytoplasmic side. A helical membrane pass occupies residues 709–729 (FAGMLFLLLAVTTAVWTIVAP). At 730–1011 (PFTESSPLKL…MVSVTKYVEL (282 aa)) the chain is on the vacuolar side. N-linked (GlcNAc...) asparagine glycans are attached at residues Asn751, Asn825, and Asn854.

Belongs to the peptidase M28 family. Zn(2+) is required as a cofactor.

The protein localises to the vacuole membrane. Its function is as follows. May be involved in vacuolar sorting and osmoregulation. The chain is Vacuolar membrane protease from Eremothecium gossypii (strain ATCC 10895 / CBS 109.51 / FGSC 9923 / NRRL Y-1056) (Yeast).